A 540-amino-acid chain; its full sequence is 2-isopropylmalate synthase (540 aa).

One can recognise a Pyruvate carboxyltransferase domain in the interval 8–269 (VLIFDTTLRD…YFNPFFGREP (262 aa)). The Mn(2+) site is built by D17, H208, H210, and N244. Positions 408–540 (QLRLVQVSCG…AVLADLRSGI (133 aa)) are regulatory domain.

Belongs to the alpha-IPM synthase/homocitrate synthase family. LeuA type 1 subfamily. Homodimer. The cofactor is Mn(2+).

The protein localises to the cytoplasm. It catalyses the reaction 3-methyl-2-oxobutanoate + acetyl-CoA + H2O = (2S)-2-isopropylmalate + CoA + H(+). Its pathway is amino-acid biosynthesis; L-leucine biosynthesis; L-leucine from 3-methyl-2-oxobutanoate: step 1/4. Catalyzes the condensation of the acetyl group of acetyl-CoA with 3-methyl-2-oxobutanoate (2-ketoisovalerate) to form 3-carboxy-3-hydroxy-4-methylpentanoate (2-isopropylmalate). The sequence is that of 2-isopropylmalate synthase from Prochlorococcus marinus (strain MIT 9313).